The primary structure comprises 229 residues: Claudin-25 (229 aa).

The Cytoplasmic segment spans residues 1 to 10; that stretch reads MAWSFRAKVQ. The chain crosses the membrane as a helical span at residues 11-31; sequence LGGLLLSLLGWVCSCVTTILP. Topologically, residues 32-81 are extracellular; the sequence is QWKTLNLELNEMETWIMGIWEVCVDREEVATVCKAFESFLSLPQELQVAR. The helical transmembrane segment at 82 to 102 threads the bilayer; the sequence is ILMVASHGLGLLGLLLCSFGS. The Cytoplasmic portion of the chain corresponds to 103 to 124; the sequence is ECFQFHRIRWVFKRRLGLLGRT. A helical transmembrane segment spans residues 125–145; it reads LEASASATTLLPVSWVAHATI. Topologically, residues 146-164 are extracellular; it reads QDFWDDSIPDIIPRWEFGG. Residues 165–185 form a helical membrane-spanning segment; sequence ALYLGWAAGIFLALGGLLLIF. The Cytoplasmic segment spans residues 186–229; sequence SACLGKEDVPFPLMAGPTVPLSCAPVEESDGSFHLMLRPRNLVI.

It belongs to the claudin family.

The protein localises to the cell junction. The protein resides in the tight junction. It localises to the cell membrane. In terms of biological role, plays a major role in tight junction-specific obliteration of the intercellular space, through calcium-independent cell-adhesion activity. This chain is Claudin-25 (CLDN25), found in Homo sapiens (Human).